Reading from the N-terminus, the 218-residue chain is GTP cyclohydrolase 1 (218 aa).

Residues cysteine 109, histidine 112, and cysteine 180 each contribute to the Zn(2+) site.

It belongs to the GTP cyclohydrolase I family. In terms of assembly, toroid-shaped homodecamer, composed of two pentamers of five dimers.

It carries out the reaction GTP + H2O = 7,8-dihydroneopterin 3'-triphosphate + formate + H(+). It participates in cofactor biosynthesis; 7,8-dihydroneopterin triphosphate biosynthesis; 7,8-dihydroneopterin triphosphate from GTP: step 1/1. In Histophilus somni (strain 129Pt) (Haemophilus somnus), this protein is GTP cyclohydrolase 1.